A 92-amino-acid chain; its full sequence is Small ribosomal subunit protein uS19 (92 aa).

Belongs to the universal ribosomal protein uS19 family.

In terms of biological role, protein S19 forms a complex with S13 that binds strongly to the 16S ribosomal RNA. This Cereibacter sphaeroides (strain ATCC 17029 / ATH 2.4.9) (Rhodobacter sphaeroides) protein is Small ribosomal subunit protein uS19.